We begin with the raw amino-acid sequence, 75 residues long: Mitotic-spindle organizing protein 1 (75 aa).

The protein belongs to the MOZART1 family. Part of the gamma-tubulin complex.

It is found in the cytoplasm. It localises to the cytoskeleton. The protein localises to the microtubule organizing center. Its subcellular location is the centrosome. The protein resides in the spindle. Required for gamma-tubulin complex recruitment to the centrosome. In Danio rerio (Zebrafish), this protein is Mitotic-spindle organizing protein 1 (mzt1).